Consider the following 187-residue polypeptide: Threonylcarbamoyl-AMP synthase (187 aa).

A YrdC-like domain is found at 4 to 187; it reads TLDLDRAVAA…DARSGQILRD (184 aa).

It belongs to the SUA5 family. TsaC subfamily.

The protein localises to the cytoplasm. The enzyme catalyses L-threonine + hydrogencarbonate + ATP = L-threonylcarbamoyladenylate + diphosphate + H2O. Required for the formation of a threonylcarbamoyl group on adenosine at position 37 (t(6)A37) in tRNAs that read codons beginning with adenine. Catalyzes the conversion of L-threonine, HCO(3)(-)/CO(2) and ATP to give threonylcarbamoyl-AMP (TC-AMP) as the acyladenylate intermediate, with the release of diphosphate. The protein is Threonylcarbamoyl-AMP synthase of Xanthomonas axonopodis pv. citri (strain 306).